We begin with the raw amino-acid sequence, 764 residues long: Semaphorin-3D (764 aa).

A signal peptide spans 1 to 41 (MKTAGEPDRRRQRRQVRTGRFSCAWWSTSVMLFFSLPEGNC). Positions 48-535 (RVKLGYKDLI…GSDGLVQVSL (488 aa)) constitute a Sema domain. Cysteines 121 and 132 form a disulfide. Asparagine 143 carries an N-linked (GlcNAc...) asparagine glycan. 3 disulfides stabilise this stretch: cysteine 150–cysteine 159, cysteine 290–cysteine 402, and cysteine 314–cysteine 362. Asparagine 490 is a glycosylation site (N-linked (GlcNAc...) asparagine). Cysteine 538 and cysteine 556 form a disulfide bridge. Residue asparagine 610 is glycosylated (N-linked (GlcNAc...) asparagine). The region spanning 661–740 (GDAGSYFCTS…EYCETMWHRE (80 aa)) is the Ig-like C2-type domain. Cysteine 668 and cysteine 733 are oxidised to a cystine. The interval 743 to 764 (QKQKGKWKHVQELRKSRNRRHH) is disordered.

It belongs to the semaphorin family.

Its subcellular location is the secreted. Its function is as follows. May play a role in the guidance of several axon pathways. The chain is Semaphorin-3D (sema3d) from Danio rerio (Zebrafish).